The primary structure comprises 1168 residues: DNA-directed RNA polymerase subunit beta (1168 aa).

The protein belongs to the RNA polymerase beta chain family. As to quaternary structure, the RNAP catalytic core consists of 2 alpha, 1 beta, 1 beta' and 1 omega subunit. When a sigma factor is associated with the core the holoenzyme is formed, which can initiate transcription.

It carries out the reaction RNA(n) + a ribonucleoside 5'-triphosphate = RNA(n+1) + diphosphate. DNA-dependent RNA polymerase catalyzes the transcription of DNA into RNA using the four ribonucleoside triphosphates as substrates. In Rhodococcus jostii (strain RHA1), this protein is DNA-directed RNA polymerase subunit beta.